The sequence spans 24 residues: FLPIIASVAANVFSKIFCAISKKC.

A disulfide bridge links cysteine 18 with cysteine 24.

As to expression, expressed by the skin glands.

It localises to the secreted. In terms of biological role, antibacterial activity against Gram-positive bacterium S.aureus and Gram-negative bacterium E.coli. Has activity against C.albicans. This is Brevinin-1Pd from Lithobates pipiens (Northern leopard frog).